A 330-amino-acid chain; its full sequence is Methionyl-tRNA formyltransferase (330 aa).

116-119 contacts (6S)-5,6,7,8-tetrahydrofolate; it reads SLLP.

The protein belongs to the Fmt family.

It carries out the reaction L-methionyl-tRNA(fMet) + (6R)-10-formyltetrahydrofolate = N-formyl-L-methionyl-tRNA(fMet) + (6S)-5,6,7,8-tetrahydrofolate + H(+). Functionally, attaches a formyl group to the free amino group of methionyl-tRNA(fMet). The formyl group appears to play a dual role in the initiator identity of N-formylmethionyl-tRNA by promoting its recognition by IF2 and preventing the misappropriation of this tRNA by the elongation apparatus. The sequence is that of Methionyl-tRNA formyltransferase from Nitratidesulfovibrio vulgaris (strain ATCC 29579 / DSM 644 / CCUG 34227 / NCIMB 8303 / VKM B-1760 / Hildenborough) (Desulfovibrio vulgaris).